Consider the following 346-residue polypeptide: N-acetyl-gamma-glutamyl-phosphate reductase (346 aa).

Residue Cys151 is part of the active site.

Belongs to the NAGSA dehydrogenase family. Type 1 subfamily.

The protein resides in the cytoplasm. The enzyme catalyses N-acetyl-L-glutamate 5-semialdehyde + phosphate + NADP(+) = N-acetyl-L-glutamyl 5-phosphate + NADPH + H(+). Its pathway is amino-acid biosynthesis; L-arginine biosynthesis; N(2)-acetyl-L-ornithine from L-glutamate: step 3/4. In terms of biological role, catalyzes the NADPH-dependent reduction of N-acetyl-5-glutamyl phosphate to yield N-acetyl-L-glutamate 5-semialdehyde. The polypeptide is N-acetyl-gamma-glutamyl-phosphate reductase (Ehrlichia chaffeensis (strain ATCC CRL-10679 / Arkansas)).